A 303-amino-acid chain; its full sequence is UDP-3-O-acyl-N-acetylglucosamine deacetylase (303 aa).

Residues histidine 78, histidine 237, and aspartate 241 each coordinate Zn(2+). The active-site Proton donor is histidine 264.

Belongs to the LpxC family. Zn(2+) is required as a cofactor.

It catalyses the reaction a UDP-3-O-[(3R)-3-hydroxyacyl]-N-acetyl-alpha-D-glucosamine + H2O = a UDP-3-O-[(3R)-3-hydroxyacyl]-alpha-D-glucosamine + acetate. It functions in the pathway glycolipid biosynthesis; lipid IV(A) biosynthesis; lipid IV(A) from (3R)-3-hydroxytetradecanoyl-[acyl-carrier-protein] and UDP-N-acetyl-alpha-D-glucosamine: step 2/6. Its function is as follows. Catalyzes the hydrolysis of UDP-3-O-myristoyl-N-acetylglucosamine to form UDP-3-O-myristoylglucosamine and acetate, the committed step in lipid A biosynthesis. The chain is UDP-3-O-acyl-N-acetylglucosamine deacetylase from Pseudomonas savastanoi pv. phaseolicola (strain 1448A / Race 6) (Pseudomonas syringae pv. phaseolicola (strain 1448A / Race 6)).